The sequence spans 131 residues: Large ribosomal subunit protein bL17 (131 aa).

Belongs to the bacterial ribosomal protein bL17 family. As to quaternary structure, part of the 50S ribosomal subunit. Contacts protein L32.

The polypeptide is Large ribosomal subunit protein bL17 (Teredinibacter turnerae (strain ATCC 39867 / T7901)).